The following is a 328-amino-acid chain: Methionyl-tRNA formyltransferase (328 aa).

(6S)-5,6,7,8-tetrahydrofolate is bound at residue 110 to 113 (SLLP).

It belongs to the Fmt family.

It catalyses the reaction L-methionyl-tRNA(fMet) + (6R)-10-formyltetrahydrofolate = N-formyl-L-methionyl-tRNA(fMet) + (6S)-5,6,7,8-tetrahydrofolate + H(+). Attaches a formyl group to the free amino group of methionyl-tRNA(fMet). The formyl group appears to play a dual role in the initiator identity of N-formylmethionyl-tRNA by promoting its recognition by IF2 and preventing the misappropriation of this tRNA by the elongation apparatus. This Prochlorococcus marinus (strain AS9601) protein is Methionyl-tRNA formyltransferase.